A 115-amino-acid chain; its full sequence is MNMIMVISVNIILSSTLILVAFWLPQLNIYTEKANPYECGFDPMSSARLPFSMKFFLVAITFLLFDLEIALLLPIPWAIQMPDMKTMMLTAFILVSILALGLAYEWTQKGLEWTE.

Helical transmembrane passes span 4 to 24 (IMVISVNIILSSTLILVAFWL), 55 to 75 (FFLVAITFLLFDLEIALLLPI), and 86 to 106 (TMMLTAFILVSILALGLAYEW).

Belongs to the complex I subunit 3 family. In terms of assembly, core subunit of respiratory chain NADH dehydrogenase (Complex I) which is composed of 45 different subunits. Interacts with TMEM186. Interacts with TMEM242.

Its subcellular location is the mitochondrion inner membrane. The catalysed reaction is a ubiquinone + NADH + 5 H(+)(in) = a ubiquinol + NAD(+) + 4 H(+)(out). In terms of biological role, core subunit of the mitochondrial membrane respiratory chain NADH dehydrogenase (Complex I) which catalyzes electron transfer from NADH through the respiratory chain, using ubiquinone as an electron acceptor. Essential for the catalytic activity of complex I. In Baiomys taylori (Northern pygmy mouse), this protein is NADH-ubiquinone oxidoreductase chain 3.